The primary structure comprises 366 residues: Alanine racemase (366 aa).

The active-site Proton acceptor; specific for D-alanine is K33. Position 33 is an N6-(pyridoxal phosphate)lysine (K33). R129 contacts substrate. The Proton acceptor; specific for L-alanine role is filled by Y253. M301 contacts substrate.

It belongs to the alanine racemase family. The cofactor is pyridoxal 5'-phosphate.

The enzyme catalyses L-alanine = D-alanine. The protein operates within amino-acid biosynthesis; D-alanine biosynthesis; D-alanine from L-alanine: step 1/1. In terms of biological role, catalyzes the interconversion of L-alanine and D-alanine. May also act on other amino acids. The polypeptide is Alanine racemase (alr) (Xanthomonas oryzae pv. oryzae (strain MAFF 311018)).